Consider the following 634-residue polypeptide: 1,4-alpha-glucan branching enzyme GlgB (634 aa).

The active-site Nucleophile is the D305. E357 functions as the Proton donor in the catalytic mechanism.

Belongs to the glycosyl hydrolase 13 family. GlgB subfamily. Monomer.

The enzyme catalyses Transfers a segment of a (1-&gt;4)-alpha-D-glucan chain to a primary hydroxy group in a similar glucan chain.. It participates in glycan biosynthesis; glycogen biosynthesis. Functionally, catalyzes the formation of the alpha-1,6-glucosidic linkages in glycogen by scission of a 1,4-alpha-linked oligosaccharide from growing alpha-1,4-glucan chains and the subsequent attachment of the oligosaccharide to the alpha-1,6 position. This Lactiplantibacillus plantarum (strain ATCC BAA-793 / NCIMB 8826 / WCFS1) (Lactobacillus plantarum) protein is 1,4-alpha-glucan branching enzyme GlgB.